A 344-amino-acid polypeptide reads, in one-letter code: Protein RecA (344 aa).

Position 65 to 72 (65 to 72) interacts with ATP; sequence GPESSGKT.

Belongs to the RecA family.

The protein resides in the cytoplasm. In terms of biological role, can catalyze the hydrolysis of ATP in the presence of single-stranded DNA, the ATP-dependent uptake of single-stranded DNA by duplex DNA, and the ATP-dependent hybridization of homologous single-stranded DNAs. It interacts with LexA causing its activation and leading to its autocatalytic cleavage. This chain is Protein RecA, found in Xanthomonas oryzae pv. oryzae (strain PXO99A).